The following is a 351-amino-acid chain: MSITNSAIYTFPESSFSDNGNIEPLPLKVNEQRKAVPHIRVVRIGDPPKHGSRYLDVFLLGFFEMERSKDRYGSVSDLDDDPSYKVCGSGSLPLGLARYTGNDQELLQAATKLDIEVRRTVKATEMIVYTVQNIKPELYPWSSRLRKGMLFDANKVALAPQCLPLDRGIKFRVIFVNCTAIGSITLFKIPKSMALLSLPNTISINLQVHIKTGIQTDSKGVVQILDEKGEKSLNFMVHLGLIKRKMGRMYSVEYCKQKIEKMRLLFSLGLVGGISLHVNATGSISKTLASQLAFKREICYPLMDLNPHLNLVIWASSVEITRVDAIFQPSLPGEFRYYPNIIAKGVGKIRQ.

The protein belongs to the morbillivirus/respirovirus/rubulavirus M protein family.

The protein resides in the virion. In terms of biological role, plays a crucial role in virus assembly and interacts with the RNP complex as well as with the viral membrane. This is Matrix protein (M) from Bos taurus (Bovine).